The following is a 388-amino-acid chain: Na(+)/H(+) antiporter NhaA (388 aa).

Topologically, residues 1–11 (MKHLHRFFSSD) are cytoplasmic. The chain crosses the membrane as a helical span at residues 12–31 (ASGGIILIIAAILAMIMANS). The Periplasmic portion of the chain corresponds to 32–58 (GATSGWYHDFLETPVQLRVGSLEINKN). The helical transmembrane segment at 59-80 (MLLWINDALMAVFFLLVGLEVK) threads the bilayer. Residues 81–96 (RELMQGSLASLRQAAF) lie on the Cytoplasmic side of the membrane. A helical transmembrane segment spans residues 97–116 (PVIAAIGGMIVPALLYLAFN). Residues 117-122 (YADPIT) lie on the Periplasmic side of the membrane. The chain crosses the membrane as a helical span at residues 123-130 (REGWAIPA). The Cytoplasmic segment spans residues 131–154 (ATDIAFALGVLALLGSRVPLALKI). A helical transmembrane segment spans residues 155–176 (FLMALAIIDDLGAIIIIALFYT). Residues 177–180 (NDLS) are Periplasmic-facing. Residues 181 to 200 (MASLGVAAVAIAVLAVLNLC) traverse the membrane as a helical segment. Over 201–204 (GVRR) the chain is Cytoplasmic. Residues 205–222 (TGVYILVGVVLWTAVLKS) traverse the membrane as a helical segment. Position 223 (Gly223) is a topological domain, periplasmic. A helical transmembrane segment spans residues 224-236 (VHATLAGVIVGFF). The Cytoplasmic segment spans residues 237–253 (IPLKEKHGRSPAKRLEH). A helical transmembrane segment spans residues 254 to 272 (VLHPWVAYLILPLFAFANA). The Periplasmic segment spans residues 273 to 286 (GVSLQGVTLDGLTS). A helical transmembrane segment spans residues 287-310 (ILPLGIIAGLLIGKPLGISLFCWL). Residues 311–339 (ALRLKLAHLPEGTTYQQIMAVGILCGIGF) lie on the Cytoplasmic side of the membrane. A helical transmembrane segment spans residues 340–350 (TMSIFIASLAF). The Periplasmic segment spans residues 351-357 (GSVDPEL). The helical transmembrane segment at 358 to 380 (INWAKLGILVGSISSAVIGYSWL) threads the bilayer. The Cytoplasmic segment spans residues 381–388 (RVRLRPSV).

This sequence belongs to the NhaA Na(+)/H(+) (TC 2.A.33) antiporter family.

Its subcellular location is the cell inner membrane. The enzyme catalyses Na(+)(in) + 2 H(+)(out) = Na(+)(out) + 2 H(+)(in). Its function is as follows. Na(+)/H(+) antiporter that extrudes sodium in exchange for external protons. The protein is Na(+)/H(+) antiporter NhaA of Escherichia coli O9:H4 (strain HS).